Reading from the N-terminus, the 1047-residue chain is Probable alpha-mannosidase At5g66150 (1047 aa).

Residues 1–27 (MEKPGMSLLKGSLCVIVFLLLLSLVES) form the signal peptide. Zn(2+)-binding residues include His56, Asp58, and Asp178. N-linked (GlcNAc...) asparagine glycans are attached at residues Asn280, Asn287, and Asn345. His419 serves as a coordination point for Zn(2+). 2 disulfides stabilise this stretch: Cys455–Cys465 and Cys476–Cys484. N-linked (GlcNAc...) asparagine glycans are attached at residues Asn480, Asn508, Asn541, Asn605, Asn606, Asn668, Asn780, and Asn857. Cys855 and Cys860 are disulfide-bonded.

The protein belongs to the glycosyl hydrolase 38 family. In terms of assembly, homodimer. Requires Zn(2+) as cofactor.

The protein localises to the vacuole. The enzyme catalyses Hydrolysis of terminal, non-reducing alpha-D-mannose residues in alpha-D-mannosides.. In terms of biological role, liberates mannose from p-nitrophenyl-alpha-D-mannoside in vitro. The chain is Probable alpha-mannosidase At5g66150 from Arabidopsis thaliana (Mouse-ear cress).